Reading from the N-terminus, the 530-residue chain is White collar 2 protein (530 aa).

Repeat copies occupy residues glycine 9–methionine 12, glycine 21–methionine 24, glycine 25–methionine 28, glycine 29–methionine 32, glycine 33–methionine 36, glycine 37–methionine 40, and glycine 41–methionine 44. A 7 X 4 AA repeats of G-[SAT]-G-M region spans residues glycine 9 to methionine 44. The tract at residues isoleucine 134–glutamate 158 is disordered. Residues proline 144–serine 154 are compositionally biased toward gly residues. Residues arginine 162–glycine 232 enclose the PAS domain. The segment at arginine 315–aspartate 343 is disordered. The segment at cysteine 468–cysteine 493 adopts a GATA-type zinc-finger fold. Positions lysine 504 to glycine 530 are disordered.

As to quaternary structure, heterodimer of wc-1 and wc-2 (Potential). Binds to DNA.

It is found in the nucleus. May function as a transcription factor involved in light regulation. Binds and affects blue light regulation of the al-3 gene. Wc-1 and wc-2 interact via homologous PAS domains, bind to promoters of light regulated genes such as frq, and activate transcription. May bind directly to frq. In Neurospora crassa (strain ATCC 24698 / 74-OR23-1A / CBS 708.71 / DSM 1257 / FGSC 987), this protein is White collar 2 protein (wc-2).